The sequence spans 346 residues: C5a anaphylatoxin chemotactic receptor 1 (346 aa).

The Extracellular portion of the chain corresponds to 1–33; sequence MDDNNSDWTSYDFGNDTIPSPNEISLSHIGTRH. N4 and N15 each carry an N-linked (GlcNAc...) asparagine glycan. Residues 34–60 form a helical membrane-spanning segment; sequence WITLVCYGIVFLLGVPGNALVVWVTGF. Topologically, residues 61-65 are cytoplasmic; the sequence is RMPNS. A helical transmembrane segment spans residues 66-89; the sequence is VNAQWFLNLAIADLLCCLSLPILM. The Extracellular segment spans residues 90 to 106; sequence VPLAQDQHWPFGALACK. A disulfide bridge links C105 with C183. The chain crosses the membrane as a helical span at residues 107 to 128; the sequence is LFSGIFYMMMYCSVLLLVVISL. Residues 129-149 are Cytoplasmic-facing; it reads DRFLLVTKPVWCQNNRQPRQA. A helical transmembrane segment spans residues 150 to 170; that stretch reads RILCFIIWILGLLGSSPYFAH. At 171–194 the chain is on the extracellular side; that stretch reads MEIQHHSETKTVCTGSYSSLGHAW. Residues 195-220 traverse the membrane as a helical segment; it reads AITIIRSFLFFLLPFLIICISHWKVY. Residues 221–238 lie on the Cytoplasmic side of the membrane; it reads HMTSSGRRQRDKSSRTLR. The chain crosses the membrane as a helical span at residues 239-261; that stretch reads VILALVLGFFLCWTPLHIVDLLI. Residues 262–279 are Extracellular-facing; it reads LVSDQPSERFEVNLNLAH. The helical transmembrane segment at 280–300 threads the bilayer; the sequence is VLTLCLAYINSCLNPLLYVCL. Residues 301-346 are Cytoplasmic-facing; that stretch reads GRGFKENLISSLRSVLHFASEAPTHGPSMTTNSKSTTDGVFREKPV. Positions 323–346 are disordered; that stretch reads PTHGPSMTTNSKSTTDGVFREKPV. Over residues 327-338 the composition is skewed to polar residues; it reads PSMTTNSKSTTD.

This sequence belongs to the G-protein coupled receptor 1 family.

It is found in the cell membrane. In terms of biological role, receptor for the chemotactic and inflammatory peptide anaphylatoxin C5a. This receptor stimulates chemotaxis, granule enzyme release and superoxide anion production. The sequence is that of C5a anaphylatoxin chemotactic receptor 1 (c5ar1) from Danio rerio (Zebrafish).